Here is a 1005-residue protein sequence, read N- to C-terminus: Mediator of RNA polymerase II transcription subunit 24 (1005 aa).

The protein belongs to the Mediator complex subunit 24 family. Component of the Mediator complex.

Its subcellular location is the nucleus. Component of the Mediator complex, a coactivator involved in the regulated transcription of nearly all RNA polymerase II-dependent genes. Mediator functions as a bridge to convey information from gene-specific regulatory proteins to the basal RNA polymerase II transcription machinery. Mediator is recruited to promoters by direct interactions with regulatory proteins and serves as a scaffold for the assembly of a functional preinitiation complex with RNA polymerase II and the general transcription factors. This Aedes aegypti (Yellowfever mosquito) protein is Mediator of RNA polymerase II transcription subunit 24 (MED24).